The sequence spans 463 residues: Chromogranin-A (463 aa).

Residues 1 to 18 (MRSTAVLALLLCAGQVFA) form the signal peptide. Cys-35 and Cys-56 are disulfide-bonded. Residues 88-440 (KERAQQPLKQ…ANRRAEDQEL (353 aa)) are disordered. The span at 92–116 (QQPLKQQQPPKQQQQQQQQQQQEQQ) shows a compositional bias: low complexity. Residue Ser-119 is modified to Phosphoserine. Residues 134–160 (DAKHRDAAAEVPSRDTMEKRKDSDKGQ) show a composition bias toward basic and acidic residues. Polar residues predominate over residues 196-208 (TATNTQSPTSLPS). Ser-220, Ser-282, and Ser-308 each carry phosphoserine. Residues 301 to 310 (GKGELEHSQQ) are compositionally biased toward basic and acidic residues. Gly-329 carries the post-translational modification Glycine amide. Composition is skewed to basic and acidic residues over residues 331–340 (KGRELEHKQE) and 348–375 (RLSR…KRLE). A phosphoserine mark is found at Ser-350 and Ser-383. Methionine sulfoxide is present on Met-384. Residues 409–437 (SSREDSVEARSDFEEKKEEEGSANRRAED) show a composition bias toward basic and acidic residues. Ser-410, Ser-414, and Ser-430 each carry phosphoserine. O-linked (Xyl...) (chondroitin sulfate) serine glycosylation is present at Ser-430. A Pyrrolidone carboxylic acid modification is found at Gln-438. Ser-444 carries the phosphoserine modification.

It belongs to the chromogranin/secretogranin protein family. Self-interacts; self-assembly is promoted in vitro by chondroitin sulfate attachment which occurs at mildly acidic pH conditions. Interacts with SCG3; this interaction is optimal in conditions mimicking the lumenal milieu of the trans-Golgi network, i.e. pH 5.5 and 10 mM Ca(+2). Interacts with ITPR1 in the secretory granules. In terms of processing, O-glycosylated; contains chondroitin sulfate (CS). CS attachment is pH-dependent, being observed at mildly acidic conditions of pH 5 but not at neutral pH, and promotes self-assembly in vitro.

It is found in the cytoplasmic vesicle. The protein resides in the secretory vesicle. Its subcellular location is the neuronal dense core vesicle. The protein localises to the secreted. Strongly inhibits glucose induced insulin release from the pancreas. Functionally, inhibits catecholamine release from chromaffin cells and noradrenergic neurons by acting as a non-competitive nicotinic cholinergic antagonist. Can induce mast cell migration, degranulation and production of cytokines and chemokines. Its function is as follows. Regulates granule biogenesis in endocrine cells by up-regulating the transcription of protease nexin 1 (SERPINE2) via a cAMP-PKA-SP1 pathway. This leads to inhibition of granule protein degradation in the Golgi complex which in turn promotes granule formation. Pyroglutaminated (pGlu)-serpinin exerts an antiapoptotic effect on cells exposed to oxidative stress. The chain is Chromogranin-A (Chga) from Mus musculus (Mouse).